A 460-amino-acid polypeptide reads, in one-letter code: Fumarate hydratase class II (460 aa).

Substrate contacts are provided by residues 95–97, 126–129, 136–138, and threonine 184; these read SGT, HPND, and SSN. The active-site Proton donor/acceptor is histidine 185. Serine 315 is an active-site residue. Substrate-binding positions include serine 316 and 321–323; that span reads KVN.

This sequence belongs to the class-II fumarase/aspartase family. Fumarase subfamily. In terms of assembly, homotetramer.

Its subcellular location is the cytoplasm. It carries out the reaction (S)-malate = fumarate + H2O. Its pathway is carbohydrate metabolism; tricarboxylic acid cycle; (S)-malate from fumarate: step 1/1. In terms of biological role, involved in the TCA cycle. Catalyzes the stereospecific interconversion of fumarate to L-malate. This is Fumarate hydratase class II from Chlamydia pneumoniae (Chlamydophila pneumoniae).